The sequence spans 170 residues: Phosphopantetheine adenylyltransferase (170 aa).

Threonine 10 is a substrate binding site. ATP contacts are provided by residues 10–11 and histidine 18; that span reads TF. Substrate-binding residues include lysine 42, leucine 75, and arginine 89. ATP is bound by residues 90 to 92, glutamate 100, and 125 to 131; these read GVR and YTYVASS.

Belongs to the bacterial CoaD family. Homohexamer. The cofactor is Mg(2+).

The protein resides in the cytoplasm. The catalysed reaction is (R)-4'-phosphopantetheine + ATP + H(+) = 3'-dephospho-CoA + diphosphate. Its pathway is cofactor biosynthesis; coenzyme A biosynthesis; CoA from (R)-pantothenate: step 4/5. Functionally, reversibly transfers an adenylyl group from ATP to 4'-phosphopantetheine, yielding dephospho-CoA (dPCoA) and pyrophosphate. The chain is Phosphopantetheine adenylyltransferase from Chlorobium limicola (strain DSM 245 / NBRC 103803 / 6330).